The chain runs to 282 residues: Cell cycle checkpoint protein RAD1 (282 aa).

It belongs to the rad1 family. In terms of assembly, component of the toroidal 9-1-1 (RAD9-RAD1-HUS1) complex, composed of RAD9A, RAD1 and HUS1. The 9-1-1 complex associates with LIG1, POLB, FEN1, RAD17, HDAC1, RPA1 and RPA2. The 9-1-1 complex associates with the RAD17-RFC complex. RAD1 interacts with POLB, FEN1, HUS1, HUS1B, RAD9A and RAD9B. Interacts with DNAJC7. Interacts with RHNO1; interaction is direct. In terms of tissue distribution, expressed in testis, uterus, bladder, spleen, ovaries, lung, brain and muscle (at protein level).

The protein localises to the nucleus. Its function is as follows. Component of the 9-1-1 cell-cycle checkpoint response complex that plays a major role in DNA repair. The 9-1-1 complex is recruited to DNA lesion upon damage by the RAD17-replication factor C (RFC) clamp loader complex. Acts then as a sliding clamp platform on DNA for several proteins involved in long-patch base excision repair (LP-BER). The 9-1-1 complex stimulates DNA polymerase beta (POLB) activity by increasing its affinity for the 3'-OH end of the primer-template and stabilizes POLB to those sites where LP-BER proceeds; endonuclease FEN1 cleavage activity on substrates with double, nick, or gap flaps of distinct sequences and lengths; and DNA ligase I (LIG1) on long-patch base excision repair substrates. The 9-1-1 complex is necessary for the recruitment of RHNO1 to sites of double-stranded breaks (DSB) occurring during the S phase. The sequence is that of Cell cycle checkpoint protein RAD1 (RAD1) from Homo sapiens (Human).